We begin with the raw amino-acid sequence, 225 residues long: Ribosomal RNA small subunit methyltransferase G (225 aa).

S-adenosyl-L-methionine contacts are provided by residues Gly84, Phe89, 107 to 109 (DST), 135 to 136 (AE), and Arg154.

It belongs to the methyltransferase superfamily. RNA methyltransferase RsmG family.

Its subcellular location is the cytoplasm. Functionally, specifically methylates the N7 position of a guanine in 16S rRNA. The protein is Ribosomal RNA small subunit methyltransferase G of Microcystis aeruginosa (strain NIES-843 / IAM M-2473).